Here is a 594-residue protein sequence, read N- to C-terminus: (-)-endo-fenchol synthase, chloroplastic (594 aa).

A chloroplast-targeting transit peptide spans 1-50 (MSSLVMHVGIVNKPAITYLPTLSRSASNLHNVSSTRLQTSCSLQLDYKPV). D348, D352, D492, and E500 together coordinate Mg(2+). Residues 348-352 (DDIYD) carry the DDXXD motif motif.

This sequence belongs to the terpene synthase family. Tpsa subfamily. The cofactor is Mg(2+). Requires Mn(2+) as cofactor. In terms of tissue distribution, expressed at high levels in leaves.

It is found in the plastid. Its subcellular location is the chloroplast. The enzyme catalyses (2E)-geranyl diphosphate = alpha-pinene + diphosphate. The catalysed reaction is (2E)-geranyl diphosphate + H2O = (1S,2S,4R)-endo-fenchol + diphosphate. It carries out the reaction (2E)-geranyl diphosphate = limonene + diphosphate. It participates in secondary metabolite biosynthesis; terpenoid biosynthesis. Functionally, monoterpene synthase involved in the biosynthesis of volatile compounds widely used in aromatherapy and folk medicine, and present in culinary herbs. Mediates the conversion of (2E)-geranyl diphosphate (GPP) into alpha fenchol, limonene and alpha-pinene and, as minor compounds, into beta-myrcene, alpha-terpinolene and alpha-phellandrene. In Lavandula pedunculata subsp. lusitanica (French lavender), this protein is (-)-endo-fenchol synthase, chloroplastic.